Here is a 343-residue protein sequence, read N- to C-terminus: tRNA N6-adenosine threonylcarbamoyltransferase (343 aa).

Positions 120 and 124 each coordinate Fe cation. Substrate-binding positions include 142–146, Asp175, Gly188, Asp192, and Asn281; that span reads VVSGG. Asp310 lines the Fe cation pocket.

This sequence belongs to the KAE1 / TsaD family. Fe(2+) serves as cofactor.

It is found in the cytoplasm. The enzyme catalyses L-threonylcarbamoyladenylate + adenosine(37) in tRNA = N(6)-L-threonylcarbamoyladenosine(37) in tRNA + AMP + H(+). Required for the formation of a threonylcarbamoyl group on adenosine at position 37 (t(6)A37) in tRNAs that read codons beginning with adenine. Is involved in the transfer of the threonylcarbamoyl moiety of threonylcarbamoyl-AMP (TC-AMP) to the N6 group of A37, together with TsaE and TsaB. TsaD likely plays a direct catalytic role in this reaction. The protein is tRNA N6-adenosine threonylcarbamoyltransferase of Bacillus thuringiensis (strain Al Hakam).